The following is a 75-amino-acid chain: Large ribosomal subunit protein bL28 (75 aa).

Belongs to the bacterial ribosomal protein bL28 family.

This chain is Large ribosomal subunit protein bL28, found in Buchnera aphidicola subsp. Acyrthosiphon pisum (strain 5A).